Here is a 588-residue protein sequence, read N- to C-terminus: Snake venom 5'-nucleotidase (588 aa).

An N-terminal signal peptide occupies residues Met-1–Gly-40. Zn(2+) contacts are provided by Asp-51 and His-53. A disulfide bridge connects residues Cys-66 and Cys-71. The Zn(2+) site is built by Asp-99 and Asn-131. The N-linked (GlcNAc...) asparagine glycan is linked to Asn-167. Positions 234 and 257 each coordinate Zn(2+). N-linked (GlcNAc...) asparagine glycosylation is found at Asn-347 and Asn-361. 2 disulfide bridges follow: Cys-367/Cys-372 and Cys-379/Cys-401. Residue Arg-368 participates in AMP binding. AMP is bound by residues Asn-404 and Arg-409. N-linked (GlcNAc...) asparagine glycosylation occurs at Asn-418. Phe-432 is a binding site for AMP. Cys-491 and Cys-494 are joined by a disulfide. AMP contacts are provided by Phe-515 and Asp-521. N-linked (GlcNAc...) asparagine glycosylation occurs at Asn-532. The GPI-anchor amidated serine moiety is linked to residue Ser-564. A propeptide spans Ala-565–Leu-588 (removed in mature form).

This sequence belongs to the 5'-nucleotidase family. Requires Zn(2+) as cofactor. In terms of processing, venom 5'-nucleotidases (or a part thereof) may be released into the venom via exosome-like vesicles. They may be attached via a GPI anchor to the membrane of these vesicles. Soluble forms of 5'-nucleotidase might be released by cleavage of the ectodomain in the exosome-like vesicles or venom gland cells. Expressed by the venom gland.

It localises to the membrane. It carries out the reaction a ribonucleoside 5'-phosphate + H2O = a ribonucleoside + phosphate. Functionally, hydrolyzes nucleotides into nucleosides. Snake venom 5'-nucleotidases are widely distributed among venomous snake taxa, but there is a lack of information about their biological activities. They have been shown to inhibit platelet aggregation. This effect may be due to the liberation of inhibitory AMP or adenosine by its action on ADP released upon initiation of aggregation. Venom 5'-nucleotidases are also known to synergistically act in vivo with other toxins like ADPases, phospholipases, and disintegrins to exert a more pronounced anti-coagulant effect. The polypeptide is Snake venom 5'-nucleotidase (Crotalus adamanteus (Eastern diamondback rattlesnake)).